We begin with the raw amino-acid sequence, 336 residues long: MSKEYEIIIVGGGPGGYVAAIKAAQYGAKVALVEKEVVGGICLNHGCIPTKTFLKSAKVFNTVKKSMDFGVSTSGEVGFDWSKIVSRKDGVVKQLTNGVAFLLKKNGVDVYNGFGDIKSANEVVVNGESLKTKNVIIATGSSAVVPPIPGVKEAYEKGIVVTSRELLNVKNYPKSIVIVGGGVIGVEFATVFNSFGSKVTIIEMMDGILPTMDDDIRVAYAKTLKRDGIEILTKAEVKKVDDHKVTYSLDGKETTIEGDLILMSVGTRANSKGLEHLGLEMDRANIKTNEYLQTNVPGVYAIGDVNGKFMLAHVAEHEGITAVQHILKIGHAKMNY.

Residues 34–42 (EKEVVGGIC), K51, and G115 each bind FAD. An intrachain disulfide couples C42 to C47. NAD(+) is bound by residues 180–184 (GGGVI), E203, V237, and 264–267 (SVGT). D304 and A312 together coordinate FAD.

The protein belongs to the class-I pyridine nucleotide-disulfide oxidoreductase family. As to quaternary structure, homodimer. FAD is required as a cofactor.

It localises to the cytoplasm. It catalyses the reaction N(6)-[(R)-dihydrolipoyl]-L-lysyl-[protein] + NAD(+) = N(6)-[(R)-lipoyl]-L-lysyl-[protein] + NADH + H(+). Its function is as follows. Lipoamide dehydrogenase is a component of the alpha-ketoacid dehydrogenase complexes. The protein is Dihydrolipoyl dehydrogenase (pdhD) of Acholeplasma laidlawii.